We begin with the raw amino-acid sequence, 274 residues long: NH(3)-dependent NAD(+) synthetase (274 aa).

An ATP-binding site is contributed by 46–53 (GISGGQDS). A Mg(2+)-binding site is contributed by Asp52. Arg140 serves as a coordination point for deamido-NAD(+). Thr160 provides a ligand contact to ATP. Mg(2+) is bound at residue Glu165. Deamido-NAD(+)-binding residues include Lys173 and Asp180. Residues Lys189 and Thr211 each coordinate ATP. 260–261 (HK) provides a ligand contact to deamido-NAD(+).

It belongs to the NAD synthetase family. As to quaternary structure, homodimer.

The enzyme catalyses deamido-NAD(+) + NH4(+) + ATP = AMP + diphosphate + NAD(+) + H(+). It functions in the pathway cofactor biosynthesis; NAD(+) biosynthesis; NAD(+) from deamido-NAD(+) (ammonia route): step 1/1. Its function is as follows. Catalyzes the ATP-dependent amidation of deamido-NAD to form NAD. Uses ammonia as a nitrogen source. The polypeptide is NH(3)-dependent NAD(+) synthetase (Rhodococcus erythropolis (strain PR4 / NBRC 100887)).